We begin with the raw amino-acid sequence, 1285 residues long: MKTKHFFNSDFTVKGKSADEIFRRLCTDHPDKQLNNVKWKEVFINRFGQMMLDTPNPRKIVEKIINEGLEKQGLKNIDPETTYFNIFSSSDSSDGNVFHYNSLSESYRVTDACLMNIFVERYFDDWDLLNSLASNGIYSVGKEGAYYPDHDYGPEYNPVWGPNEQIYHSRVIADILYARSVWDEFKKYFMEYWQKYAQLYTEMLSDTFLAMAIQQYTRQTLTDEGFLMVCNTYYGNKEEVQITLLDIYGYPSTDIICIEQKGLPTPKVILYIPGGTQPFVEFLNTDDLKQWIAWHLKDNKHMVAFRKHFSLKQRQEGETFTGIDKALQYIAEESPEWPANKYILYNPTHLETENLFNIMMKRTEQRMLEDSDVQIRSNSEATRDYALSLLETFISQLSAIDMLVPAVGIPINFALSATALGLSSDIVVNGDSYEKRKYGIGSLVQSALFTGINLIPVISETAEILSSFSRTEEDIPAFFTEEQALAQRFEIVEEELHSISPDDPPREITDENLHKIRLVRLNNENQPLVVLRRLGGNKFIRIEPITFQEIKGSLVSEVINPVTNKTYYVSNAKLLGGSPYSPFRIGLEGVWTPEVLKARASVIGKPIGESYKRILAKLQRIHNSNILDERQGLMHELMELIDLYEESQPSSERLNAFRELRTQLEKALYLPEMEALKKQILQIPNKGSGAARFLLRTAMNEMAGKTSESTADLIRFALQDTVISAPFRGYAGAIPEAIDFPVKYVIEDISVFDKIQTNYWELPAYESWNEGSNSALLPGLLRESQSKGMLSKCRIIENSLYIGHSYEEMFYSISPYSNQVGGPYELYPFTFFSMLQEVQGDLGFEQAFATRNFFNTLVSDRLSLMENTMLLTESFDYTPWDAIYGDINYDEQFAAMSINERIEKCMNTYRGVAFQNSSKSIDFFLNNLTTFIDNGLTEIAISDLPYDIVQQEISQFLQGSNEWKTLDAMLFNLDKGDINGAFRKLLQSAKDNNIKFRAIGHSDNSVPPFNNPYKSLYYKGNIIAEAIEKLDREGQKFVVFADSSLLNSTPGTGRPMPGLVQYLKIPATVVDSDGAWQFLPDVASSRVPIEVTELENWQVLTPPQGKILGLKQFKLTAGFPTEQSRLPLLENSVSEDLREELMQKIDAIKNDVKMNSLVCMEAGSCDSVSPKVAARLKDMGLEAGMGASITWWRREGGMEFSHQMHTTASFKFAGKEFAVDASHLQFVHDQLDTTILILPVDDWALEIAQRNRAINPFVEYVSKTGNMLALFMPPLFTKPRLTRAL.

The chain crosses the membrane as a helical span at residues 402–422 (MLVPAVGIPINFALSATALGL).

The protein localises to the cytoplasm. The protein resides in the secreted. Its subcellular location is the host membrane. Functionally, this is a dermonecrotic toxin. This osteolytic toxin, induces bone resorption. Potent mitogen. This toxin is associated with the severe progressive form of the atrophic rhinitis, a major respiratory disease in pigs. The polypeptide is Dermonecrotic toxin (toxA) (Pasteurella multocida).